Here is a 420-residue protein sequence, read N- to C-terminus: 3-isopropylmalate dehydratase large subunit (420 aa).

Cys300, Cys360, and Cys363 together coordinate [4Fe-4S] cluster.

The protein belongs to the aconitase/IPM isomerase family. LeuC type 2 subfamily. In terms of assembly, heterodimer of LeuC and LeuD. [4Fe-4S] cluster is required as a cofactor.

The catalysed reaction is (2R,3S)-3-isopropylmalate = (2S)-2-isopropylmalate. Its pathway is amino-acid biosynthesis; L-leucine biosynthesis; L-leucine from 3-methyl-2-oxobutanoate: step 2/4. Its function is as follows. Catalyzes the isomerization between 2-isopropylmalate and 3-isopropylmalate, via the formation of 2-isopropylmaleate. In Halothermothrix orenii (strain H 168 / OCM 544 / DSM 9562), this protein is 3-isopropylmalate dehydratase large subunit.